The primary structure comprises 262 residues: tRNA pseudouridine synthase A (262 aa).

Asp56 functions as the Nucleophile in the catalytic mechanism. A substrate-binding site is contributed by Tyr114.

Belongs to the tRNA pseudouridine synthase TruA family. Homodimer.

It carries out the reaction uridine(38/39/40) in tRNA = pseudouridine(38/39/40) in tRNA. Functionally, formation of pseudouridine at positions 38, 39 and 40 in the anticodon stem and loop of transfer RNAs. The protein is tRNA pseudouridine synthase A of Lactiplantibacillus plantarum (strain ATCC BAA-793 / NCIMB 8826 / WCFS1) (Lactobacillus plantarum).